The chain runs to 196 residues: MKVAIFGGTFNPIHIGHLIMAQYVKNFSEVDRVIFVPNGVPPHKNVDIALPEDRFEMVKLSIEDNPDFEISDFEIKNKEPSWTINTLNYFATSYEKVYFILGSDNLFEIIKWYRAEEILKKFPIIVLPRERNTTLIRRQIEELGIQFSAKMVLIDMPIIDISSTEIRRLIRENKSIRYMVHPKVEEYIIRKGLYKE.

The protein belongs to the NadD family.

The catalysed reaction is nicotinate beta-D-ribonucleotide + ATP + H(+) = deamido-NAD(+) + diphosphate. The protein operates within cofactor biosynthesis; NAD(+) biosynthesis; deamido-NAD(+) from nicotinate D-ribonucleotide: step 1/1. Catalyzes the reversible adenylation of nicotinate mononucleotide (NaMN) to nicotinic acid adenine dinucleotide (NaAD). In Caldicellulosiruptor saccharolyticus (strain ATCC 43494 / DSM 8903 / Tp8T 6331), this protein is Probable nicotinate-nucleotide adenylyltransferase.